The following is a 157-amino-acid chain: uncharacterized protein (157 aa).

Residues 9-154 (LLINYKTLDE…ETNLNAVTNE (146 aa)) enclose the N-acetyltransferase domain.

This is an uncharacterized protein from Bacillus cereus (strain B4264).